Reading from the N-terminus, the 908-residue chain is Probable RNA-directed DNA polymerase from transposon X-element (908 aa).

Residues 481–752 (AIVRLQYFPY…NAAKYLGVLL (272 aa)) enclose the Reverse transcriptase domain. Positions 883-908 (RPPRRLNRRQPRDLITRSPLTRVRRS) are disordered.

The cofactor is Mg(2+). Mn(2+) is required as a cofactor.

The catalysed reaction is DNA(n) + a 2'-deoxyribonucleoside 5'-triphosphate = DNA(n+1) + diphosphate. This is Probable RNA-directed DNA polymerase from transposon X-element (X-element\ORF2) from Drosophila melanogaster (Fruit fly).